We begin with the raw amino-acid sequence, 422 residues long: Tyrosine--tRNA ligase (422 aa).

Tyr35 contacts L-tyrosine. A 'HIGH' region motif is present at residues Pro40–His49. L-tyrosine is bound by residues Tyr170 and Gln174. The 'KMSKS' region motif lies at Lys231 to Thr235. Lys234 is a binding site for ATP. The 67-residue stretch at Ala353–Ile419 folds into the S4 RNA-binding domain.

The protein belongs to the class-I aminoacyl-tRNA synthetase family. TyrS type 1 subfamily. Homodimer.

Its subcellular location is the cytoplasm. It catalyses the reaction tRNA(Tyr) + L-tyrosine + ATP = L-tyrosyl-tRNA(Tyr) + AMP + diphosphate + H(+). In terms of biological role, catalyzes the attachment of tyrosine to tRNA(Tyr) in a two-step reaction: tyrosine is first activated by ATP to form Tyr-AMP and then transferred to the acceptor end of tRNA(Tyr). In Streptomyces coelicolor (strain ATCC BAA-471 / A3(2) / M145), this protein is Tyrosine--tRNA ligase.